Here is a 477-residue protein sequence, read N- to C-terminus: V-type ATP synthase beta chain (477 aa).

Belongs to the ATPase alpha/beta chains family.

Its function is as follows. Produces ATP from ADP in the presence of a proton gradient across the membrane. The V-type beta chain is a regulatory subunit. The chain is V-type ATP synthase beta chain from Anaeromyxobacter dehalogenans (strain 2CP-1 / ATCC BAA-258).